A 528-amino-acid polypeptide reads, in one-letter code: Chromosomal replication initiator protein DnaA (528 aa).

Positions 1-104 are domain I, interacts with DnaA modulators; it reads MNDDPNALAR…PVDDEPESEA (104 aa). Positions 93 to 159 are disordered; sequence AAPVDDEPES…DFEEVDDDSE (67 aa). Positions 104-123 are enriched in basic and acidic residues; the sequence is APSRERRPDPEPVHTPRHLE. A domain II region spans residues 105–187; the sequence is PSRERRPDPE…GPAPAATGGN (83 aa). Over residues 149–159 the composition is skewed to acidic residues; that stretch reads TDFEEVDDDSE. The domain III, AAA+ region stretch occupies residues 188-404; sequence SLNAKYTFDT…GALIRVTAFA (217 aa). Residues Gly232, Gly234, Lys235, and Thr236 each contribute to the ATP site. Positions 405-528 are domain IV, binds dsDNA; it reads SLNRQPLDLT…TARIKQRSKR (124 aa).

The protein belongs to the DnaA family. As to quaternary structure, oligomerizes as a right-handed, spiral filament on DNA at oriC.

Its subcellular location is the cytoplasm. Its function is as follows. Plays an essential role in the initiation and regulation of chromosomal replication. ATP-DnaA binds to the origin of replication (oriC) to initiate formation of the DNA replication initiation complex once per cell cycle. Binds the DnaA box (a 9 base pair repeat at the origin) and separates the double-stranded (ds)DNA. Forms a right-handed helical filament on oriC DNA; dsDNA binds to the exterior of the filament while single-stranded (ss)DNA is stabiized in the filament's interior. The ATP-DnaA-oriC complex binds and stabilizes one strand of the AT-rich DNA unwinding element (DUE), permitting loading of DNA polymerase. After initiation quickly degrades to an ADP-DnaA complex that is not apt for DNA replication. Binds acidic phospholipids. This chain is Chromosomal replication initiator protein DnaA, found in Rhodococcus opacus (strain B4).